A 139-amino-acid polypeptide reads, in one-letter code: Large ribosomal subunit protein uL16 (139 aa).

The span at Met1 to Ala20 shows a compositional bias: basic residues. Residues Met1 to Gly24 are disordered.

This sequence belongs to the universal ribosomal protein uL16 family. Part of the 50S ribosomal subunit.

Its function is as follows. Binds 23S rRNA and is also seen to make contacts with the A and possibly P site tRNAs. This chain is Large ribosomal subunit protein uL16, found in Nocardioides sp. (strain ATCC BAA-499 / JS614).